A 569-amino-acid polypeptide reads, in one-letter code: GATOR1 complex protein NPRL3 (569 aa).

Disordered regions lie at residues 27–60 (PFQR…EQDG) and 416–477 (PSEE…GDSP). 2 stretches are compositionally biased toward polar residues: residues 34-52 (HPAS…SNTG) and 438-468 (SLST…NSSA). Ser476 is modified (phosphoserine).

Belongs to the NPR3 family. As to quaternary structure, within the GATOR complex, component of the GATOR1 subcomplex, made of DEPDC5, NPRL2 and NPRL3. GATOR1 mediates the strong interaction of the GATOR complex with small GTPases Rag (RagA/RRAGA, RagB/RRAGB, RagC/RRAGC and/or RagD/RRAGD) heterodimers. GATOR1 interacts with GPR155/LYCHOS; interaction takes place in presence of cholesterol and prevents interaction between GATOR1 and KICSTOR. Widely expressed. Expressed in the frontal lobe cortex as well as in the temporal, parietal, and occipital lobes.

Its subcellular location is the lysosome membrane. In terms of biological role, as a component of the GATOR1 complex functions as an inhibitor of the amino acid-sensing branch of the mTORC1 pathway. In response to amino acid depletion, the GATOR1 complex has GTPase activating protein (GAP) activity and strongly increases GTP hydrolysis by RagA/RRAGA (or RagB/RRAGB) within heterodimeric Rag complexes, thereby turning them into their inactive GDP-bound form, releasing mTORC1 from lysosomal surface and inhibiting mTORC1 signaling. In the presence of abundant amino acids, the GATOR1 complex is negatively regulated by GATOR2, the other GATOR subcomplex, in this amino acid-sensing branch of the TORC1 pathway. In Homo sapiens (Human), this protein is GATOR1 complex protein NPRL3.